The sequence spans 275 residues: Dermonecrotic toxin LhSicTox-alphaIV2 (275 aa).

Histidine 5 is a catalytic residue. Mg(2+) is bound by residues glutamate 25 and aspartate 27. Histidine 41 serves as the catalytic Nucleophile. 2 cysteine pairs are disulfide-bonded: cysteine 45/cysteine 51 and cysteine 47/cysteine 192. A Mg(2+)-binding site is contributed by aspartate 85.

Belongs to the arthropod phospholipase D family. Class II subfamily. The cofactor is Mg(2+). In terms of tissue distribution, expressed by the venom gland.

The protein localises to the secreted. It carries out the reaction an N-(acyl)-sphingosylphosphocholine = an N-(acyl)-sphingosyl-1,3-cyclic phosphate + choline. The catalysed reaction is an N-(acyl)-sphingosylphosphoethanolamine = an N-(acyl)-sphingosyl-1,3-cyclic phosphate + ethanolamine. It catalyses the reaction a 1-acyl-sn-glycero-3-phosphocholine = a 1-acyl-sn-glycero-2,3-cyclic phosphate + choline. The enzyme catalyses a 1-acyl-sn-glycero-3-phosphoethanolamine = a 1-acyl-sn-glycero-2,3-cyclic phosphate + ethanolamine. In terms of biological role, dermonecrotic toxins cleave the phosphodiester linkage between the phosphate and headgroup of certain phospholipids (sphingolipid and lysolipid substrates), forming an alcohol (often choline) and a cyclic phosphate. This toxin acts on sphingomyelin (SM). It may also act on ceramide phosphoethanolamine (CPE), lysophosphatidylcholine (LPC) and lysophosphatidylethanolamine (LPE), but not on lysophosphatidylserine (LPS), and lysophosphatidylglycerol (LPG). It acts by transphosphatidylation, releasing exclusively cyclic phosphate products as second products. Induces dermonecrosis, hemolysis, increased vascular permeability, edema, inflammatory response, and platelet aggregation. This is Dermonecrotic toxin LhSicTox-alphaIV2 from Loxosceles hirsuta (Recluse spider).